A 255-amino-acid polypeptide reads, in one-letter code: 3-deoxy-manno-octulosonate cytidylyltransferase (255 aa).

It belongs to the KdsB family.

It is found in the cytoplasm. It carries out the reaction 3-deoxy-alpha-D-manno-oct-2-ulosonate + CTP = CMP-3-deoxy-beta-D-manno-octulosonate + diphosphate. Its pathway is nucleotide-sugar biosynthesis; CMP-3-deoxy-D-manno-octulosonate biosynthesis; CMP-3-deoxy-D-manno-octulosonate from 3-deoxy-D-manno-octulosonate and CTP: step 1/1. It participates in bacterial outer membrane biogenesis; lipopolysaccharide biosynthesis. Activates KDO (a required 8-carbon sugar) for incorporation into bacterial lipopolysaccharide in Gram-negative bacteria. This chain is 3-deoxy-manno-octulosonate cytidylyltransferase, found in Xanthobacter autotrophicus (strain ATCC BAA-1158 / Py2).